We begin with the raw amino-acid sequence, 99 residues long: Integration host factor subunit alpha (99 aa).

The segment at 52-73 (FGNFTLRDKPQRPGRNPKTGEE) is disordered.

It belongs to the bacterial histone-like protein family. Heterodimer of an alpha and a beta chain.

Its function is as follows. This protein is one of the two subunits of integration host factor, a specific DNA-binding protein that functions in genetic recombination as well as in transcriptional and translational control. This is Integration host factor subunit alpha from Legionella pneumophila subsp. pneumophila (strain Philadelphia 1 / ATCC 33152 / DSM 7513).